A 954-amino-acid polypeptide reads, in one-letter code: Glycine dehydrogenase (decarboxylating) (954 aa).

Lys-706 carries the N6-(pyridoxal phosphate)lysine modification.

The protein belongs to the GcvP family. The glycine cleavage system is composed of four proteins: P, T, L and H. Pyridoxal 5'-phosphate is required as a cofactor.

It catalyses the reaction N(6)-[(R)-lipoyl]-L-lysyl-[glycine-cleavage complex H protein] + glycine + H(+) = N(6)-[(R)-S(8)-aminomethyldihydrolipoyl]-L-lysyl-[glycine-cleavage complex H protein] + CO2. In terms of biological role, the glycine cleavage system catalyzes the degradation of glycine. The P protein binds the alpha-amino group of glycine through its pyridoxal phosphate cofactor; CO(2) is released and the remaining methylamine moiety is then transferred to the lipoamide cofactor of the H protein. The polypeptide is Glycine dehydrogenase (decarboxylating) (Pseudomonas syringae pv. tomato (strain ATCC BAA-871 / DC3000)).